Consider the following 61-residue polypeptide: Small ribosomal subunit protein uS14 (61 aa).

4 residues coordinate Zn(2+): C24, C27, C40, and C43.

The protein belongs to the universal ribosomal protein uS14 family. Zinc-binding uS14 subfamily. In terms of assembly, part of the 30S ribosomal subunit. Contacts proteins S3 and S10. It depends on Zn(2+) as a cofactor.

In terms of biological role, binds 16S rRNA, required for the assembly of 30S particles and may also be responsible for determining the conformation of the 16S rRNA at the A site. This is Small ribosomal subunit protein uS14 from Treponema pallidum (strain Nichols).